A 123-amino-acid chain; its full sequence is Large ribosomal subunit protein bL12 (123 aa).

Belongs to the bacterial ribosomal protein bL12 family. As to quaternary structure, homodimer. Part of the ribosomal stalk of the 50S ribosomal subunit. Forms a multimeric L10(L12)X complex, where L10 forms an elongated spine to which 2 to 4 L12 dimers bind in a sequential fashion. Binds GTP-bound translation factors.

In terms of biological role, forms part of the ribosomal stalk which helps the ribosome interact with GTP-bound translation factors. Is thus essential for accurate translation. The sequence is that of Large ribosomal subunit protein bL12 from Mycoplasmopsis synoviae (strain 53) (Mycoplasma synoviae).